The primary structure comprises 1097 residues: DNA-directed RNA polymerase subunit beta (1097 aa).

The disordered stretch occupies residues 1072-1097; sequence QDINPRRNTPSRPTYESLGTSEYEED. The span at 1077–1091 shows a compositional bias: polar residues; that stretch reads RRNTPSRPTYESLGT.

This sequence belongs to the RNA polymerase beta chain family. In terms of assembly, in cyanobacteria the RNAP catalytic core is composed of 2 alpha, 1 beta, 1 beta', 1 gamma and 1 omega subunit. When a sigma factor is associated with the core the holoenzyme is formed, which can initiate transcription.

The catalysed reaction is RNA(n) + a ribonucleoside 5'-triphosphate = RNA(n+1) + diphosphate. Its function is as follows. DNA-dependent RNA polymerase catalyzes the transcription of DNA into RNA using the four ribonucleoside triphosphates as substrates. The chain is DNA-directed RNA polymerase subunit beta from Prochlorococcus marinus (strain MIT 9301).